The chain runs to 171 residues: MLRTPTVSALVRNVAVRAAKPTMAVRAASTMPISNPTLANIEKRWEQMPMQEQAELWMALRDRMKGNWADLTLQEKKAAYYIAFGPHGPRALPPPGEQKKVLAYTVAGVFLSFVIFATMRAFAKPPPATMTKEWQEATNEFLKAQKSDPLTGLTSEGYNGKGHVQSPSASA.

Residues 1 to 27 (MLRTPTVSALVRNVAVRAAKPTMAVRA) constitute a mitochondrion transit peptide. Residues 28 to 100 (ASTMPISNPT…ALPPPGEQKK (73 aa)) are Mitochondrial matrix-facing. A helical transmembrane segment spans residues 101 to 123 (VLAYTVAGVFLSFVIFATMRAFA). Residues 124–171 (KPPPATMTKEWQEATNEFLKAQKSDPLTGLTSEGYNGKGHVQSPSASA) lie on the Mitochondrial intermembrane side of the membrane. Residues 145 to 171 (QKSDPLTGLTSEGYNGKGHVQSPSASA) form a disordered region.

This sequence belongs to the cytochrome c oxidase IV family. As to quaternary structure, component of the cytochrome c oxidase (complex IV, CIV), a multisubunit enzyme composed of 11 subunits. The complex is composed of a catalytic core of 3 subunits Cox1, Cox2 and Cox3, encoded in the mitochondrial DNA, and 8 supernumerary subunits Cox4, Cox5a/Cox5, Cox6, Cox7, Cox8, Cox7a/Cox9, Cox6b/Cox12 and Cox6a/Cox13, which are encoded in the nuclear genome. The complex exists as a monomer or a dimer and forms respiratory supercomplexes (SCs) in the inner mitochondrial membrane with NADH-ubiquinone oxidoreductase (complex I, CI) and ubiquinol-cytochrome c oxidoreductase (cytochrome b-c1 complex, complex III, CIII), resulting in various different assemblies (supercomplexes I(1)IV(1), I(1)III(3)IV(2), III(2)IV(1) and III(2)IV(2) as well as larger supercomplexes of compositions like I(1)III(2)IV(5-6)).

Its subcellular location is the mitochondrion inner membrane. It functions in the pathway energy metabolism; oxidative phosphorylation. Its function is as follows. Component of the cytochrome c oxidase, the last enzyme in the mitochondrial electron transport chain which drives oxidative phosphorylation. The respiratory chain contains 3 multisubunit complexes succinate dehydrogenase (complex II, CII), ubiquinol-cytochrome c oxidoreductase (cytochrome b-c1 complex, complex III, CIII) and cytochrome c oxidase (complex IV, CIV), that cooperate to transfer electrons derived from NADH and succinate to molecular oxygen, creating an electrochemical gradient over the inner membrane that drives transmembrane transport and the ATP synthase. Cytochrome c oxidase is the component of the respiratory chain that catalyzes the reduction of oxygen to water. Electrons originating from reduced cytochrome c in the intermembrane space (IMS) are transferred via the dinuclear copper A center (CU(A)) of Cox2 and heme A of Cox1 to the active site in Cox1, a binuclear center (BNC) formed by heme A3 and copper B (CU(B)). The BNC reduces molecular oxygen to 2 water molecules using 4 electrons from cytochrome c in the IMS and 4 protons from the mitochondrial matrix. The chain is Cytochrome c oxidase subunit 5, mitochondrial (cya-4) from Neurospora crassa (strain ATCC 24698 / 74-OR23-1A / CBS 708.71 / DSM 1257 / FGSC 987).